The sequence spans 209 residues: Probable GTP-binding protein EngB (209 aa).

Residues 23 to 198 form the EngB-type G domain; sequence NGAEIAFAGR…EKVVAGWLVP (176 aa). Residues 31–38, 58–62, 76–79, 143–146, and 177–179 contribute to the GTP site; these read GRSNAGKS, GRTQL, DLPG, TKSD, and FSS. Ser38 and Thr60 together coordinate Mg(2+).

It belongs to the TRAFAC class TrmE-Era-EngA-EngB-Septin-like GTPase superfamily. EngB GTPase family. Mg(2+) serves as cofactor.

Necessary for normal cell division and for the maintenance of normal septation. This Azoarcus sp. (strain BH72) protein is Probable GTP-binding protein EngB.